Consider the following 359-residue polypeptide: Non-classical arabinogalactan protein 31 (359 aa).

A signal peptide spans 1–24 (MGFIGKSVLVSLVALWCFTSSVFT). A disordered region spans residues 31-215 (TQTPSLAPAP…PPVSPPTKPP (185 aa)). Positions 44–66 (HHGHHHPHPPHHHHPHPHPHPHP) are enriched in basic residues. The segment covering 67 to 215 (PAKSPVKPPV…PPVSPPTKPP (149 aa)) has biased composition (pro residues). 4-hydroxyproline occurs at positions 71, 75, 79, 82, 83, 87, 91, 95, 99, 103, 107, 111, 114, 115, 119, 123, 127, 131, 135, 139, 143, 147, 151, 155, 159, 163, 167, 171, 175, 179, 183, 186, 187, 191, 195, 199, 203, 207, 210, 211, 215, and 219. O-linked (Ara...) hydroxyproline glycans are attached at residues P71, P75, P79, P82, P83, P87, P91, P95, P99, P103, P107, P111, P114, P115, P119, P123, P127, P131, P135, P139, P143, P147, P151, P155, P159, P163, P167, P171, P175, P179, P183, P186, P187, P191, P195, P199, P203, P207, P210, P211, P215, and P219. Residues 90–109 (PPVYPPTKAPVKPPTKPPVK) form repeat 1. 3 repeat units span residues 122 to 141 (PPVY…PPVK), 142 to 161 (PPVY…PPVK), and 162 to 181 (PPVY…PPVK). 2 N-linked (GlcNAc...) asparagine glycosylation sites follow: N226 and N269.

This sequence belongs to the non-classical AGP family. Post-translationally, hydroxylated on numerous prolines in the proline-rich region. In terms of processing, O-glycosylated on numerous hydroxyprolines in the proline-rich region; noncontiguous hydroxylproline residues are glycosylated with arabinogalactan. As to expression, expressed in vascular bundles of roots, leaves, sepals and stamen filaments, and pistils but not stigma.

The protein resides in the secreted. It is found in the cell wall. In terms of biological role, proteoglycan that may contribute to the strengthening of cell walls. This is Non-classical arabinogalactan protein 31 from Arabidopsis thaliana (Mouse-ear cress).